Reading from the N-terminus, the 389-residue chain is Acetyl-CoA:oxalate CoA-transferase (389 aa).

His237 is an active-site residue.

In terms of assembly, homodimer.

It catalyses the reaction oxalate + acetyl-CoA = oxalyl-CoA + acetate. Involved in the catabolism of oxalate and in the adapatation to low pH. ACOCT serves to prime the oxalate-induced acid tolerance response (ATR) cycle by producing substrate for oxalyl-CoA decarboxylase (OXC) and formyl-coenzyme A transferase (FCOCT). Catalyzes the reversible conversion of acetyl-CoA and oxalate to oxalyl-CoA and acetate. It can also use formyl-CoA and oxalate to produce oxalyl-CoA and formate with significantly reduced specific activity. This Acetobacter aceti protein is Acetyl-CoA:oxalate CoA-transferase (uctC).